The chain runs to 62 residues: ATP synthase subunit J, mitochondrial (62 aa).

The helical transmembrane segment at 13–32 (IVKPLWPYAVGGVITFFLFA) threads the bilayer.

F-type ATP synthases have 2 components, the catalytic core F(1) and the membrane-embedded component F(0), linked together by a central stalk and a peripheral stalk. The central stalk, also called rotor shaft, is often seen as part of F(1). The peripheral stalk is seen as part of F(0). F(0) contains the membrane channel next to the rotor. F-type ATP synthases form dimers but each monomer functions independently in ATP generation. The dimer consists of 17 different polypeptides: ATP1 (subunit alpha, 3 molecules per monomer, part of F(1)), ATP2 (subunit beta, 3 copies per monomer, part of F(1)), ATP3 (subunit gamma, part of the central stalk), ATP4 (subunit b, part of the peripheral stalk), ATP5/OSCP (subunit 5/OSCP, part of the peripheral stalk), ATP6 (subunit a, part of the peripheral stalk), ATP7 (subunit d, part of the peripheral stalk), ATP8 (subunit 8, part of the peripheral stalk), OLI1 (subunit c, part of the rotor, 10 molecules per monomer), ATP14 (subunit h, part of the peripheral stalk), ATP15 (subunit epsilon, part of the central stalk), ATP16 (subunit delta, part of the central stalk), ATP17 (subunit f, part of the peripheral stalk), ATP18 (subunit i/j, part of the peripheral stalk), ATP19 (subunit k, dimer-specific, at interface between monomers), ATP20 (subunit g, at interface between monomers), TIM11 (subunit e, at interface between monomers).

Its subcellular location is the mitochondrion inner membrane. Mitochondrial membrane ATP synthase (F(1)F(0) ATP synthase or Complex V) produces ATP from ADP in the presence of a proton gradient across the membrane which is generated by electron transport complexes of the respiratory chain. F-type ATP synthases consist of two structural domains, F(1) - containing the extramembraneous catalytic core, and F(0) - containing the membrane proton channel, linked together by a central stalk and a peripheral stalk. During catalysis, ATP synthesis in the catalytic domain of F(1) is coupled via a rotary mechanism of the central stalk subunits to proton translocation. Part of the complex F(0) domain. Minor subunit located with subunit a/ATP6 in the membrane. The chain is ATP synthase subunit J, mitochondrial from Yarrowia lipolytica (strain CLIB 122 / E 150) (Yeast).